Consider the following 616-residue polypeptide: Chaperone protein HtpG (616 aa).

An a; substrate-binding region spans residues 1-333; the sequence is MKKQFDTEVN…CQDLPLNVSR (333 aa). Residues 334 to 542 form a b region; that stretch reads EILQQNKILS…SNDPTYQMQK (209 aa). Positions 543 to 616 are c; it reads IMLSMGQEVK…INEFLEKELL (74 aa).

Belongs to the heat shock protein 90 family. In terms of assembly, homodimer.

It is found in the cytoplasm. Molecular chaperone. Has ATPase activity. This Borrelia garinii subsp. bavariensis (strain ATCC BAA-2496 / DSM 23469 / PBi) (Borreliella bavariensis) protein is Chaperone protein HtpG.